Consider the following 257-residue polypeptide: Achaete-scute complex protein T3 (257 aa).

The bHLH domain maps to 83–145; sequence PSVARRNARE…RIAVEYIRGL (63 aa). A disordered region spans residues 161-221; that stretch reads YNSADESSND…SEISGGGYIK (61 aa). 2 stretches are compositionally biased toward low complexity: residues 165 to 184 and 193 to 213; these read DESS…LDSS and QSAQ…SGSE.

As to quaternary structure, efficient DNA binding requires dimerization with another bHLH protein. In terms of tissue distribution, l(1)SC, SC and AC strongly label the presumptive stomatogastric nervous system, while ASE is more prominent in the presumptive procephalic lobe.

Functionally, AS-C proteins are involved in the determination of the neuronal precursors in the peripheral nervous system and the central nervous system. The chain is Achaete-scute complex protein T3 (l(1)sc) from Drosophila melanogaster (Fruit fly).